A 208-amino-acid polypeptide reads, in one-letter code: Ribosomal RNA large subunit methyltransferase E (208 aa).

S-adenosyl-L-methionine-binding residues include Gly-63, Trp-65, Asp-83, Asp-99, and Asp-124. Catalysis depends on Lys-164, which acts as the Proton acceptor.

This sequence belongs to the class I-like SAM-binding methyltransferase superfamily. RNA methyltransferase RlmE family.

The protein localises to the cytoplasm. The enzyme catalyses uridine(2552) in 23S rRNA + S-adenosyl-L-methionine = 2'-O-methyluridine(2552) in 23S rRNA + S-adenosyl-L-homocysteine + H(+). Functionally, specifically methylates the uridine in position 2552 of 23S rRNA at the 2'-O position of the ribose in the fully assembled 50S ribosomal subunit. This Salmonella typhi protein is Ribosomal RNA large subunit methyltransferase E.